An 84-amino-acid polypeptide reads, in one-letter code: ATP synthase subunit c (84 aa).

2 helical membrane-spanning segments follow: residues 9–29 and 54–74; these read IFGS…GFSL and IVAG…LLFI.

It belongs to the ATPase C chain family. F-type ATPases have 2 components, F(1) - the catalytic core - and F(0) - the membrane proton channel. F(1) has five subunits: alpha(3), beta(3), gamma(1), delta(1), epsilon(1). F(0) has three main subunits: a(1), b(2) and c(10-14). The alpha and beta chains form an alternating ring which encloses part of the gamma chain. F(1) is attached to F(0) by a central stalk formed by the gamma and epsilon chains, while a peripheral stalk is formed by the delta and b chains.

The protein resides in the cell inner membrane. F(1)F(0) ATP synthase produces ATP from ADP in the presence of a proton or sodium gradient. F-type ATPases consist of two structural domains, F(1) containing the extramembraneous catalytic core and F(0) containing the membrane proton channel, linked together by a central stalk and a peripheral stalk. During catalysis, ATP synthesis in the catalytic domain of F(1) is coupled via a rotary mechanism of the central stalk subunits to proton translocation. Functionally, key component of the F(0) channel; it plays a direct role in translocation across the membrane. A homomeric c-ring of between 10-14 subunits forms the central stalk rotor element with the F(1) delta and epsilon subunits. The sequence is that of ATP synthase subunit c from Histophilus somni (strain 2336) (Haemophilus somnus).